A 145-amino-acid chain; its full sequence is Granulysin (145 aa).

The first 22 residues, 1–22, serve as a signal peptide directing secretion; sequence MATWALLLLAAMLLGNPGLVFS. Positions 62–142 constitute a Saposin B-type domain; sequence LGRDYRTCLT…EDLRLCIPST (81 aa). Cystine bridges form between Cys-69/Cys-132 and Cys-96/Cys-107.

In terms of processing, a 9 kDa form is produced by proteolytic processing of a 15 kDa protein. In terms of tissue distribution, expressed in natural killer and T-cells.

Its subcellular location is the secreted. Its function is as follows. Antimicrobial protein that kills intracellular pathogens. Active against a broad range of microbes, including Gram-positive and Gram-negative bacteria, fungi, and parasites. Kills Mycobacterium tuberculosis. This chain is Granulysin (GNLY), found in Homo sapiens (Human).